A 1439-amino-acid polypeptide reads, in one-letter code: Microtubule organization protein AKNA (1439 aa).

Basic and acidic residues-rich tracts occupy residues 1–10 (MASSETEIRW) and 25–35 (AWAEDKRDVDR). Residues 1–394 (MASSETEIRW…NRKPQAPARP (394 aa)) are disordered. Ser52 bears the Phosphoserine mark. A compositionally biased stretch (basic and acidic residues) spans 71–83 (WDPHPQPDGHQDS). The span at 89–99 (SGEEAEAEDVD) shows a compositional bias: acidic residues. A compositionally biased stretch (polar residues) spans 263–275 (QDSSAPPAQSPQH). The span at 276 to 285 (ATDRWRRETT) shows a compositional bias: basic and acidic residues. A phosphoserine mark is found at Ser316, Ser499, and Ser534. Disordered regions lie at residues 507–562 (SAEW…SAEQ) and 659–682 (IDQT…PALP). Residues 533–544 (LSPSSLTSMPTL) are compositionally biased toward low complexity. Ser767 and Ser770 each carry phosphoserine. Residues 771-804 (LPEAMRMEEEEEGEEEEEEEGGGDSLEVDGVAAT) are PEST. Disordered regions lie at residues 775–942 (MRME…QTPE) and 977–1005 (IPRR…LRQR). Over residues 778–792 (EEEEEGEEEEEEEGG) the composition is skewed to acidic residues. Ser848 carries the post-translational modification Phosphoserine. A compositionally biased stretch (pro residues) spans 865–875 (PPGPGVPPHPP). 3 stretches are compositionally biased toward polar residues: residues 879–891 (SAAS…TSLE), 929–940 (SETSRVSPLTQT), and 983–999 (EPST…SSPS). Residue Ser886 is modified to Phosphoserine. Residues 911 to 932 (HLEETWMASPETDSGFVGSETS) form a PEST region. Phosphoserine occurs at positions 997 and 1010. The segment at 1095 to 1165 (LHQPLQGSPT…RARSSSVPRE (71 aa)) is disordered. A DNA-binding region (a.T hook) is located at residues 1115 to 1123 (RTRGRPADS). The span at 1135–1147 (STERLPGEPRGEE) shows a compositional bias: basic and acidic residues. 2 positions are modified to phosphoserine: Ser1172 and Ser1173. The interval 1180–1211 (LPLFSEKSKTTKDSPQAARDGKRGVGSAGWPD) is disordered. A Phosphoserine modification is found at Ser1228. Residues 1252–1329 (AGGAVTGDPL…RPPPGLWYLA (78 aa)) are disordered. Residues 1303–1317 (SSTPSPKQRSKQAGS) show a composition bias toward polar residues. Phosphoserine is present on residues Ser1377, Ser1387, and Ser1424.

This sequence belongs to the AKNA family. Interacts with DCTN1. Interacts with MAPRE1/EB1. Interacts with ODF2. Interacts with CAMSAP3. Post-translationally, phosphorylated; phosphorylation regulates dissociation from and reassembly at the centrosome. In terms of tissue distribution, predominantly expressed by lymphoid tissues. Highly expressed in the spleen, lymph nodes and peripheral blood leukocytes, expressed at lower level in the thymus. Mainly expressed by germinal center B-lymphocytes, a stage in which receptor and ligand interactions are crucial for B-lymphocyte maturation. Expressed by B- and T-lymphocytes, Natural killer cells and CD1a(+)CD14(-) but not CD1a(-)CD14(+) dendritic cells. Weakly or not expressed in fetal liver and in adult bone marrow.

It localises to the cytoplasm. The protein resides in the cytoskeleton. Its subcellular location is the microtubule organizing center. It is found in the centrosome. The protein localises to the centriole. It localises to the nucleus. Functionally, centrosomal protein that plays a key role in cell delamination by regulating microtubule organization. Required for the delamination and retention of neural stem cells from the subventricular zone during neurogenesis. Also regulates the epithelial-to-mesenchymal transition in other epithelial cells. Acts by increasing centrosomal microtubule nucleation and recruiting nucleation factors and minus-end stabilizers, thereby destabilizing microtubules at the adherens junctions and mediating constriction of the apical endfoot. In addition, may also act as a transcription factor that specifically activates the expression of the CD40 receptor and its ligand CD40L/CD154, two cell surface molecules on lymphocytes that are critical for antigen-dependent-B-cell development. Binds to A/T-rich promoters. It is unclear how it can both act as a microtubule organizer and as a transcription factor; additional evidences are required to reconcile these two apparently contradictory functions. This is Microtubule organization protein AKNA from Homo sapiens (Human).